A 352-amino-acid chain; its full sequence is Putative [LysW]-L-2-aminoadipate/[LysW]-L-glutamate phosphate reductase (352 aa).

Residues 10–13 (SGFT) and 34–36 (SRR) contribute to the NADP(+) site. Residue cysteine 151 is part of the active site. Asparagine 319 is a binding site for NADP(+).

It belongs to the NAGSA dehydrogenase family. Type 1 subfamily. LysY sub-subfamily.

It is found in the cytoplasm. The enzyme catalyses [amino-group carrier protein]-C-terminal-N-(1-carboxy-5-oxopentan-1-yl)-L-glutamine + phosphate + NADP(+) = [amino-group carrier protein]-C-terminal-N-(1-carboxy-5-phosphooxy-5-oxopentan-1-yl)-L-glutamine + NADPH + H(+). It carries out the reaction [amino-group carrier protein]-C-terminal-gamma-(L-glutamyl-5-semialdehyde)-L-glutamate + phosphate + NADP(+) = [amino-group carrier protein]-C-terminal-gamma-(5-phospho-L-glutamyl)-L-glutamate + NADPH + H(+). The protein operates within amino-acid biosynthesis; L-lysine biosynthesis via AAA pathway; L-lysine from L-alpha-aminoadipate (Thermus route): step 3/5. It participates in amino-acid biosynthesis; L-arginine biosynthesis. Functionally, involved in both the arginine and lysine biosynthetic pathways. The protein is Putative [LysW]-L-2-aminoadipate/[LysW]-L-glutamate phosphate reductase of Pyrobaculum islandicum (strain DSM 4184 / JCM 9189 / GEO3).